A 196-amino-acid polypeptide reads, in one-letter code: Acyl-homoserine-lactone synthase (196 aa).

This sequence belongs to the autoinducer synthase family.

The catalysed reaction is a fatty acyl-[ACP] + S-adenosyl-L-methionine = an N-acyl-L-homoserine lactone + S-methyl-5'-thioadenosine + holo-[ACP] + H(+). In terms of biological role, required for the synthesis of a yet unknown N-aceyl-homoserine lactone (N-aceyl-HSL), an autoinducer molecule which binds to PhzR and thus regulates phenazine production. This Pseudomonas fluorescens protein is Acyl-homoserine-lactone synthase (phzI).